The chain runs to 874 residues: Oxidation resistance protein 1 (874 aa).

Positions 1–89 (MTKDKNSPGL…KTLDKKDGRR (89 aa)) are disordered. Positions 64–89 (RRSELKRFYTIDTGQKKTLDKKDGRR) are enriched in basic and acidic residues. S91 is subject to Phosphoserine. The LysM domain occupies 99–142 (IEYTVESRDSLNSIALKFDTTPNELVQLNKLFSRAVVTGQVLYV). Residue T119 is modified to Phosphothreonine. Over residues 151 to 169 (VESSPSLSPVSPLSPTSSE) the composition is skewed to low complexity. A disordered region spans residues 151–194 (VESSPSLSPVSPLSPTSSEAEFDKTTNPDVHPTEATPSSTFTGI). Residues S201, S202, and S204 each carry the phosphoserine modification. Positions 208–275 (EAFTEKFLKI…EEVMSAAMYK (68 aa)) constitute a GRAM domain. A phosphoserine mark is found at S294, S334, and S336. Disordered stretches follow at residues 299 to 406 (CHSK…TNEV) and 431 to 537 (FQGI…ITSA). A Phosphothreonine modification is found at T341. Position 346 is a phosphoserine (S346). Positions 347–362 (PIREELVSSDELRQDK) are enriched in basic and acidic residues. Over residues 363–391 (SSGASSESVQTVNQAEVESLTVKSESTGT) the composition is skewed to polar residues. The segment covering 452-466 (SFLHENSLHQEESQK) has biased composition (basic and acidic residues). S496 is modified (phosphoserine). The segment covering 510–527 (HTMQQTKQQRENIQQVSQ) has biased composition (polar residues). The segment at 551 to 578 (QRHRLHKFLCLRVGKPMRKTFVSQASAT) is mediates oxidative antimutator activity. The TLDc domain maps to 713-874 (ELLLPDQIEK…IQDIEIWAFE (162 aa)).

Belongs to the OXR1 family.

The protein resides in the mitochondrion. In terms of biological role, may be involved in protection from oxidative damage. In Homo sapiens (Human), this protein is Oxidation resistance protein 1 (OXR1).